A 506-amino-acid polypeptide reads, in one-letter code: MKEYQVYLERARSRQQDFLYPLIFREYIYGLAYSHNFNRSIFLENVGYGNKYSLLNVKRLITRMYQQNHLIISANDSNKNPFLGYNKNFDSQIISEGFAIVVEIPFFLQLSSSLEEAEVIKSYKNVRSIHSIFPFLEDKFTYLNYVSDIQIPYPIHLEILVQILRYWVKDAPFFHLLRLFLYHFCNWNRFITTKKSISTFSKSNPRLFLFLYNFYVCEYESIFLFLRNKSSHLRLKSFSVFFERIFFYAKREHLVEVFAKDFSYTLPLFKDPNIHYVRYQGKCILASKNAPFLMKKWKHYFIHLWQCFFDVWSQPRTININQLSEHSFRLLGYFSNVRLNRSAVRSQMLQNTFLIEIVSKKLDIIVPIIPLIRSLAKAKFCNVLGHPISKPVWADSSDFDIIERFLRICRNLSHYYNGSSKKKSLYRIKYILRLSCIKTLACKHKSTVRAFLKRSGSEELLEEFFTEEEEILSLIFPRDSFTLHRFHRNRIWYLDILFSNDLVNDE.

This sequence belongs to the intron maturase 2 family. MatK subfamily.

The protein localises to the plastid. It is found in the chloroplast. Functionally, usually encoded in the trnK tRNA gene intron. Probably assists in splicing its own and other chloroplast group II introns. The sequence is that of Maturase K from Trifolium lupinaster (Lupine clover).